The following is a 366-amino-acid chain: MWPLSHRHLCLAFLLVCVLSAISFFLHVHQDSFRHGLGLSLLCPDRGLVTHPVAIFCLPGTPMSPNTSSPCPQHPASLSGTWTIYPDGRFGNQMGQYATLLALAQLNGRRAFILPAMHAALAPVFRITLPVLAPEVDGHTPWRELRLHDWMSEEYADLEDPFLKLSGFPCSWTFFHHLREQIRSEFTLHDHLREEAQSVLRRLRLGRPWDRPRTFVGVHVRRGDYLQVMPQRWKGVVGNSAYLREAMDWFRARHEAPVFVVTSNGMEWCRENIDTSKGDVMFAGDGQEASPWKDFALLTQCNHTIMTIGTFGFWAAYLAGGDTVYLANFTLPDSEFLKIFKPEAAFLPEWVGINADLSPLWTLAEP.

The Cytoplasmic portion of the chain corresponds to 1–8; sequence MWPLSHRH. The chain crosses the membrane as a helical; Signal-anchor for type II membrane protein span at residues 9-25; sequence LCLAFLLVCVLSAISFF. Over 26 to 366 the chain is Lumenal; that stretch reads LHVHQDSFRH…LSPLWTLAEP (341 aa). N-linked (GlcNAc...) asparagine glycosylation is found at N66, N302, and N328.

Belongs to the glycosyltransferase 11 family.

It is found in the golgi apparatus. It localises to the golgi stack membrane. The catalysed reaction is a beta-D-galactosyl-(1-&gt;4)-N-acetyl-beta-D-glucosaminyl derivative + GDP-beta-L-fucose = an alpha-L-Fuc-(1-&gt;2)-beta-D-Gal-(1-&gt;4)-beta-D-GlcNAc derivative + GDP + H(+). The enzyme catalyses a ganglioside GA1 + GDP-beta-L-fucose = a ganglioside Fuc-GA1 + GDP + H(+). It carries out the reaction a beta-D-Gal-(1-&gt;3)-beta-D-GlcNAc-(1-&gt;3)-beta-D-Gal-(1-&gt;4)-beta-D-Glc-(1&lt;-&gt;1')-Cer(d18:1(4E)) + GDP-beta-L-fucose = alpha-L-fucosyl-(1-&gt;2)- beta-D-galactosyl-(1-&gt;3)-N-acetyl-beta-D-glucosaminyl-(1-&gt;3)-beta-D-galactosyl-(1-&gt;4)-beta-D-glucosyl-(1&lt;-&gt;1')-N-acylsphing-4-enine + GDP + H(+). It catalyses the reaction a neolactoside nLc4Cer(d18:1(4E)) + GDP-beta-L-fucose = a neolactoside IV(2)-alpha-Fuc-nLc4Cer(d18:1(4E)) + GDP + H(+). The catalysed reaction is a ganglioside GM1 + GDP-beta-L-fucose = a ganglioside Fuc-GM1 + GDP + H(+). The enzyme catalyses beta-D-galactosyl-(1-&gt;3)-N-acetyl-D-galactosamine + GDP-beta-L-fucose = alpha-L-fucosyl-(1-&gt;2)-beta-D-galactosyl-(1-&gt;3)-N-acetyl-D-galactosamine + GDP + H(+). Its pathway is protein modification; protein glycosylation. In terms of biological role, catalyzes the transfer of L-fucose, from a guanosine diphosphate-beta-L-fucose, to the terminal galactose residue of glycoconjugates through an alpha(1,2) linkage leading to H antigen synthesis that is an intermediate substrate in the synthesis of ABO blood group antigens. H antigen is essential for maturation of the glomerular layer of the main olfactory bulb, in cell migration and early cell-cell contacts during tumor associated angiogenesis. Preferentially fucosylates soluble lactose and to a lesser extent fucosylates glycolipids gangliosides GA1 and GM1a. The sequence is that of Galactoside alpha-(1,2)-fucosyltransferase 1 from Alouatta caraya (Black howler monkey).